Here is a 574-residue protein sequence, read N- to C-terminus: Proline--tRNA ligase (574 aa).

It belongs to the class-II aminoacyl-tRNA synthetase family. ProS type 1 subfamily. In terms of assembly, homodimer.

Its subcellular location is the cytoplasm. It carries out the reaction tRNA(Pro) + L-proline + ATP = L-prolyl-tRNA(Pro) + AMP + diphosphate. Catalyzes the attachment of proline to tRNA(Pro) in a two-step reaction: proline is first activated by ATP to form Pro-AMP and then transferred to the acceptor end of tRNA(Pro). As ProRS can inadvertently accommodate and process non-cognate amino acids such as alanine and cysteine, to avoid such errors it has two additional distinct editing activities against alanine. One activity is designated as 'pretransfer' editing and involves the tRNA(Pro)-independent hydrolysis of activated Ala-AMP. The other activity is designated 'posttransfer' editing and involves deacylation of mischarged Ala-tRNA(Pro). The misacylated Cys-tRNA(Pro) is not edited by ProRS. The protein is Proline--tRNA ligase of Sodalis glossinidius (strain morsitans).